The primary structure comprises 270 residues: Cerberus (270 aa).

Positions 1 to 20 (MLLNVLRICIIVCLVNDGAG) are cleaved as a signal peptide. N-linked (GlcNAc...) asparagine glycosylation is found at N103, N112, and N154. Disulfide bonds link C169-C215, C183-C229, C193-C245, and C197-C247. The region spanning 169-253 (CKTLPFTQNI…ECTCEAHKSN (85 aa)) is the CTCK domain. N228 carries N-linked (GlcNAc...) asparagine glycosylation.

The protein belongs to the DAN family. In terms of assembly, the long chain interacts with nodal/nr-1, bmp4 and wnt8, thereby inhibiting their function. The short chain interacts with nodal/nr-1 but not bmp4 or wnt8. As to expression, a component of the Nieuwkoop signaling center in the blastula. Expressed transiently in a broad anterior domain of the gastrula, including the anterior endoderm of the Spemann's organizer and more laterally the cardiac primordia. Expression is excluded from the prospective prechordal plate region and the ring of cells that give rise to the trunk-tail mesoderm.

Its subcellular location is the secreted. Functionally, inhibits wnt, nodal/nr-1 and bmp signaling in the embryo to promote head formation and anterior neural induction. Within the endoderm, acts as an essential mediator of nodal/nr-1-induced cardiogenesis in the overlying mesoderm. This is Cerberus from Xenopus laevis (African clawed frog).